Reading from the N-terminus, the 366-residue chain is Ribosomal RNA small subunit methyltransferase H 1 (366 aa).

The disordered stretch occupies residues 1 to 46 (MADQNINKNEKVLTGQPTENQEPVHKRRERYKGTHPKTFKEKYKER). The segment covering 25–37 (HKRRERYKGTHPK) has biased composition (basic residues). Residues 97-99 (GGH), Asp-117, Phe-147, Asp-166, and Gln-173 contribute to the S-adenosyl-L-methionine site.

This sequence belongs to the methyltransferase superfamily. RsmH family.

The protein localises to the cytoplasm. It catalyses the reaction cytidine(1402) in 16S rRNA + S-adenosyl-L-methionine = N(4)-methylcytidine(1402) in 16S rRNA + S-adenosyl-L-homocysteine + H(+). Its function is as follows. Specifically methylates the N4 position of cytidine in position 1402 (C1402) of 16S rRNA. The protein is Ribosomal RNA small subunit methyltransferase H 1 of Lachnoclostridium phytofermentans (strain ATCC 700394 / DSM 18823 / ISDg) (Clostridium phytofermentans).